Consider the following 339-residue polypeptide: Cathepsin L-like peptidase (339 aa).

Positions 1–16 are cleaved as a signal peptide; it reads MKILILLVAFVAAANA. Positions 17–121 are cleaved as a propeptide — activation peptide; sequence VSLYELVKEE…VTFIEPANVE (105 aa). The N-linked (GlcNAc...) asparagine glycan is linked to Asn-95. 3 cysteine pairs are disulfide-bonded: Cys-143–Cys-186, Cys-177–Cys-219, and Cys-278–Cys-328. Residue Cys-146 is part of the active site. Residues His-285 and Asn-306 contribute to the active site.

The protein belongs to the peptidase C1 family. As to quaternary structure, dimer of a heavy and a light chain linked by disulfide bonds. Interacts with cystatin; the interaction results in inhibition of cathepsin L-like peptidase activity. In terms of tissue distribution, salivary gland. Midgut.

It catalyses the reaction Specificity close to that of papain. As compared to cathepsin B, cathepsin L exhibits higher activity toward protein substrates, but has little activity on Z-Arg-Arg-NHMec, and no peptidyl-dipeptidase activity.. More active in the presence of a reducing agent DTT. Its function is as follows. Proteinase exhibiting preference for Leu, Val and Phe residues at the P2 position. The sequence is that of Cathepsin L-like peptidase from Aedes aegypti (Yellowfever mosquito).